A 91-amino-acid chain; its full sequence is Putative regulatory protein DSY2730 (91 aa).

It belongs to the RemA family.

This Desulfitobacterium hafniense (strain Y51) protein is Putative regulatory protein DSY2730.